A 264-amino-acid chain; its full sequence is Hydroxyethylthiazole kinase (264 aa).

Met-45 is a substrate binding site. ATP-binding residues include Arg-121 and Ser-167. Substrate is bound at residue Gly-194.

It belongs to the Thz kinase family. The cofactor is Mg(2+).

The enzyme catalyses 5-(2-hydroxyethyl)-4-methylthiazole + ATP = 4-methyl-5-(2-phosphooxyethyl)-thiazole + ADP + H(+). It functions in the pathway cofactor biosynthesis; thiamine diphosphate biosynthesis; 4-methyl-5-(2-phosphoethyl)-thiazole from 5-(2-hydroxyethyl)-4-methylthiazole: step 1/1. Its function is as follows. Catalyzes the phosphorylation of the hydroxyl group of 4-methyl-5-beta-hydroxyethylthiazole (THZ). This Aliivibrio salmonicida (strain LFI1238) (Vibrio salmonicida (strain LFI1238)) protein is Hydroxyethylthiazole kinase.